A 365-amino-acid polypeptide reads, in one-letter code: tRNA-specific 2-thiouridylase MnmA (365 aa).

ATP is bound by residues 6 to 13 and M32; that span reads AMSGGVDS. C101 functions as the Nucleophile in the catalytic mechanism. A disulfide bridge connects residues C101 and C199. G125 is an ATP binding site. The tract at residues 148-150 is interaction with tRNA; it reads KDQ. C199 functions as the Cysteine persulfide intermediate in the catalytic mechanism.

It belongs to the MnmA/TRMU family.

Its subcellular location is the cytoplasm. It carries out the reaction S-sulfanyl-L-cysteinyl-[protein] + uridine(34) in tRNA + AH2 + ATP = 2-thiouridine(34) in tRNA + L-cysteinyl-[protein] + A + AMP + diphosphate + H(+). Catalyzes the 2-thiolation of uridine at the wobble position (U34) of tRNA, leading to the formation of s(2)U34. The protein is tRNA-specific 2-thiouridylase MnmA of Kineococcus radiotolerans (strain ATCC BAA-149 / DSM 14245 / SRS30216).